The primary structure comprises 239 residues: Major prion protein (239 aa).

The first 15 residues, 1 to 15 (MLVLFVATWSDLGLC), serve as a signal peptide directing secretion. Positions 15–98 (CKKRPKPGGW…NQWNKPSKPK (84 aa)) are disordered. Residues 16-31 (KKRPKPGGWNTGGSRY) form an interaction with ADGRG6 region. Residues 16 to 222 (KKRPKPGGWN…ESQAYYQRGS (207 aa)) form an interaction with GRB2, ERI3 and SYN1 region. A run of 5 repeats spans residues 44-51 (PQSGGWGQ), 52-59 (PHGGGWGQ), 60-67 (PHGGGWGQ), 68-75 (PHGGGWGQ), and 76-83 (PHGGGWGQ). The tract at residues 44-83 (PQSGGWGQPHGGGWGQPHGGGWGQPHGGGWGQPHGGGWGQ) is 5 X 8 AA tandem repeats of P-H-G-G-G-W-G-Q. The span at 47 to 87 (GGWGQPHGGGWGQPHGGGWGQPHGGGWGQPHGGGWGQGGGT) shows a compositional bias: gly residues. Cu(2+) is bound by residues His-53, Gly-54, Gly-55, His-61, Gly-62, Gly-63, His-69, Gly-70, Gly-71, His-77, Gly-78, and Gly-79. A disulfide bond links Cys-171 and Cys-206. Residues Asn-173 and Asn-189 are each glycosylated (N-linked (GlcNAc...) asparagine). The GPI-anchor amidated serine moiety is linked to residue Ser-222. Residues 223–239 (SMVLFSSPPVILLISFL) constitute a propeptide, removed in mature form.

Belongs to the prion family. As to quaternary structure, monomer and homodimer. Has a tendency to aggregate into amyloid fibrils containing a cross-beta spine, formed by a steric zipper of superposed beta-strands. Soluble oligomers may represent an intermediate stage on the path to fibril formation. Copper binding may promote oligomerization. Interacts with GRB2, APP, ERI3/PRNPIP and SYN1. Mislocalized cytosolically exposed PrP interacts with MGRN1; this interaction alters MGRN1 subcellular location and causes lysosomal enlargement. Interacts with APP. Interacts with KIAA1191. Interacts with ADGRG6.

It localises to the cell membrane. The protein resides in the golgi apparatus. In terms of biological role, its primary physiological function is unclear. May play a role in neuronal development and synaptic plasticity. May be required for neuronal myelin sheath maintenance. May promote myelin homeostasis through acting as an agonist for ADGRG6 receptor. May play a role in iron uptake and iron homeostasis. Soluble oligomers are toxic to cultured neuroblastoma cells and induce apoptosis (in vitro). Association with GPC1 (via its heparan sulfate chains) targets PRNP to lipid rafts. Also provides Cu(2+) or Zn(2+) for the ascorbate-mediated GPC1 deaminase degradation of its heparan sulfate side chains. The polypeptide is Major prion protein (PRNP) (Aotus trivirgatus (Three-striped night monkey)).